The sequence spans 248 residues: MAGHSQFKNIMHRKGKQDSVRSKMFSKLAREITVAAKAGLPDPTMNARLRLAIQNAKAQSMPKDNIERAVKKASGVDGENYEEVRYEGYGPGGVAVIVEALTDNRNRTASNVRSTFSKAGGALGETGSVSFSFDKVGEITYKASVGDADAVMEAAIEAGAEDVTSDEDGHTIICGFEDMNEVSKALEATLGEAESVKAIWKPQNTVPVDEDKAQSLMKLIETLEDDDDVQNVYSNFEVSEEVMARLSA.

Belongs to the TACO1 family.

The protein localises to the cytoplasm. This chain is Probable transcriptional regulatory protein Avi_3631, found in Allorhizobium ampelinum (strain ATCC BAA-846 / DSM 112012 / S4) (Agrobacterium vitis (strain S4)).